A 217-amino-acid chain; its full sequence is Monomethylamine corrinoid protein 2 (217 aa).

The B12-binding N-terminal domain maps to 1-91 (MTNTEIFEKL…ELEKSKVEGE (91 aa)). The B12-binding domain occupies 93-217 (TGLAITFVAE…AAKVALNIMK (125 aa)). His-106 is a methylcob(III)alamin binding site.

This sequence belongs to the methylamine corrinoid protein family. As to quaternary structure, can form a complex with MtmB.

It functions in the pathway one-carbon metabolism; methanogenesis from methylamine. Functionally, acts as a methyl group carrier between MtmB and MtbA. This is Monomethylamine corrinoid protein 2 (mtmC2) from Methanosarcina acetivorans (strain ATCC 35395 / DSM 2834 / JCM 12185 / C2A).